We begin with the raw amino-acid sequence, 216 residues long: Heart- and neural crest derivatives-expressed protein 1 (216 aa).

Disordered regions lie at residues 1–20, 53–109, and 165–203; these read MNLVGSYAHHHHHHHSHPPH, APDF…RTES, and ELKKTDGGRESKRKRELPQQPESFPPASGPGEKRIKGRT. Over residues 8-18 the composition is skewed to basic residues; it reads AHHHHHHHSHP. Low complexity predominate over residues 65-78; it reads TAVAAAAYGPDARP. The span at 92–104 shows a compositional bias: basic residues; sequence LPKRKGSGPKKER. One can recognise a bHLH domain in the interval 94 to 146; that stretch reads KRKGSGPKKERRRTESINSAFAELRECIPNVPADTKLSKIKTLRLATSYIAYL. Phosphothreonine; by PLK4 is present on T107. Position 109 is a phosphoserine; by PLK4 (S109). The segment covering 165–174 has biased composition (basic and acidic residues); sequence ELKKTDGGRE.

In terms of assembly, efficient DNA binding requires dimerization with another bHLH protein. Forms homodimers and heterodimers with TCF3 gene products E12 and E47, HAND2 and HEY1, HEY2 and HEYL (hairy-related transcription factors). Interacts with MDFIC. Interacts with SOX15; the interaction enhances HAND1-induced differentiation of trophoblast giant cells. Phosphorylation by PLK4 disrupts the interaction with MDFIC and leads to translocation into the nucleoplasm, allowing dimerization and transcription factor activity. Smooth muscle cells of the gut and adrenal tissue.

The protein resides in the nucleus. The protein localises to the nucleoplasm. It is found in the nucleolus. In terms of biological role, transcription factor that plays an essential role in both trophoblast giant cell differentiation and in cardiac morphogenesis. Binds the DNA sequence 5'-NRTCTG-3' (non-canonical E-box). Acts as a transcriptional repressor of SOX15. In the adult, could be required for ongoing expression of cardiac-specific genes. This chain is Heart- and neural crest derivatives-expressed protein 1 (Hand1), found in Mus musculus (Mouse).